Here is an 836-residue protein sequence, read N- to C-terminus: Taste receptor type 1 member 2 (836 aa).

The N-terminal stretch at 1–19 (MGPRAKAVCSLFILLQVLA) is a signal peptide. Residues 20–565 (EPAENSDFYL…AFLEWHEPST (546 aa)) are Extracellular-facing. N-linked (GlcNAc...) asparagine glycosylation is found at asparagine 84, asparagine 292, asparagine 312, asparagine 351, asparagine 427, asparagine 479, asparagine 486, asparagine 526, and asparagine 546. A helical membrane pass occupies residues 566–586 (IFVVMLTILGFLSTLAIMVIF). Topologically, residues 587-601 (WRHLHTPVVRSAGGP) are cytoplasmic. Residues 602–622 (MCFLMLVPLLLAYAMVPMYIG) form a helical membrane-spanning segment. The Extracellular portion of the chain corresponds to 623 to 634 (QPTFFSCLWRQT). Residues 635–655 (FFTLCFTICISCITVRSFQIV) traverse the membrane as a helical segment. At 656 to 680 (CIFKMARRLPRAYGYWVRCHGPYVF) the chain is on the cytoplasmic side. A helical transmembrane segment spans residues 681–701 (VASFMVLKVVIVAGNVLATTA). At 702 to 724 (NPTARPDPDDPNIMVLSCNYRRA) the chain is on the extracellular side. Residues 725 to 745 (LLFNTSLDLLLSVAGFSFAYM) form a helical membrane-spanning segment. The Cytoplasmic segment spans residues 746–757 (GKELPTNYNEAK). The chain crosses the membrane as a helical span at residues 758-778 (FITLCMTFYFTSSVSLCTFMS). At 779–781 (VYD) the chain is on the extracellular side. Residues 782 to 802 (GVLVTILDLLITVLNLLGISF) form a helical membrane-spanning segment. Topologically, residues 803–836 (GYFGPKCYMVLFYPERNTQVYFSSMIQGYTMGKD) are cytoplasmic.

This sequence belongs to the G-protein coupled receptor 3 family. TAS1R subfamily. As to quaternary structure, forms heterodimers with TAS1R3.

The protein resides in the cell membrane. Putative taste receptor. TAS1R2/TAS1R3 recognizes diverse natural and synthetic sweeteners. In Canis lupus familiaris (Dog), this protein is Taste receptor type 1 member 2 (TAS1R2).